The chain runs to 475 residues: UDP-N-acetylmuramate--L-alanine ligase (475 aa).

125–131 (GTHGKTS) serves as a coordination point for ATP.

Belongs to the MurCDEF family.

The protein localises to the cytoplasm. It catalyses the reaction UDP-N-acetyl-alpha-D-muramate + L-alanine + ATP = UDP-N-acetyl-alpha-D-muramoyl-L-alanine + ADP + phosphate + H(+). Its pathway is cell wall biogenesis; peptidoglycan biosynthesis. In terms of biological role, cell wall formation. In Mycolicibacterium gilvum (strain PYR-GCK) (Mycobacterium gilvum (strain PYR-GCK)), this protein is UDP-N-acetylmuramate--L-alanine ligase.